The sequence spans 595 residues: DNA mismatch repair protein MutL (595 aa).

This sequence belongs to the DNA mismatch repair MutL/HexB family.

In terms of biological role, this protein is involved in the repair of mismatches in DNA. It is required for dam-dependent methyl-directed DNA mismatch repair. May act as a 'molecular matchmaker', a protein that promotes the formation of a stable complex between two or more DNA-binding proteins in an ATP-dependent manner without itself being part of a final effector complex. The chain is DNA mismatch repair protein MutL from Endomicrobium trichonymphae.